We begin with the raw amino-acid sequence, 177 residues long: MSRVAKAPVAIPAGVEVKLNGQEITVKGAKGELSRVINNAVVIAQEENKLTFGPREGVANAWAQAGTARALVNNMVVGVTEGFTRKLILKGVGYRAAIKGNAVGLTLGFSHPVEHELPAGIKAECPSQTEIVLTGCDKQLIGQVAADIRAYRAPEPYKGKGIRYADENVRSKEAKKK.

It belongs to the universal ribosomal protein uL6 family. In terms of assembly, part of the 50S ribosomal subunit.

This protein binds to the 23S rRNA, and is important in its secondary structure. It is located near the subunit interface in the base of the L7/L12 stalk, and near the tRNA binding site of the peptidyltransferase center. This Vibrio vulnificus (strain CMCP6) protein is Large ribosomal subunit protein uL6.